Consider the following 288-residue polypeptide: Pyridoxal kinase PdxY (288 aa).

Residues Ser-10 and 45 to 46 each bind substrate; that span reads TQ. Asp-112, Ala-143, Glu-148, and Lys-181 together coordinate ATP. Asp-222 contacts substrate.

Belongs to the pyridoxine kinase family. PdxY subfamily. Homodimer. Mg(2+) serves as cofactor.

The catalysed reaction is pyridoxal + ATP = pyridoxal 5'-phosphate + ADP + H(+). It participates in cofactor metabolism; pyridoxal 5'-phosphate salvage; pyridoxal 5'-phosphate from pyridoxal: step 1/1. Pyridoxal kinase involved in the salvage pathway of pyridoxal 5'-phosphate (PLP). Catalyzes the phosphorylation of pyridoxal to PLP. The polypeptide is Pyridoxal kinase PdxY (Paraburkholderia xenovorans (strain LB400)).